Consider the following 289-residue polypeptide: ATP synthase gamma chain (289 aa).

The protein belongs to the ATPase gamma chain family. F-type ATPases have 2 components, CF(1) - the catalytic core - and CF(0) - the membrane proton channel. CF(1) has five subunits: alpha(3), beta(3), gamma(1), delta(1), epsilon(1). CF(0) has three main subunits: a, b and c.

The protein resides in the cell inner membrane. Its function is as follows. Produces ATP from ADP in the presence of a proton gradient across the membrane. The gamma chain is believed to be important in regulating ATPase activity and the flow of protons through the CF(0) complex. This Phocaeicola vulgatus (strain ATCC 8482 / DSM 1447 / JCM 5826 / CCUG 4940 / NBRC 14291 / NCTC 11154) (Bacteroides vulgatus) protein is ATP synthase gamma chain.